The following is a 437-amino-acid chain: tRNA-2-methylthio-N(6)-dimethylallyladenosine synthase (437 aa).

In terms of domain architecture, MTTase N-terminal spans 1 to 115 (MKVYIETMGC…ISQVIHKEKA (115 aa)). Positions 10, 46, 78, 148, 152, and 155 each coordinate [4Fe-4S] cluster. The Radical SAM core domain maps to 134 to 367 (KKAQIRSLLN…QNRHKEILEE (234 aa)). The TRAM domain maps to 370–436 (KLEVGKTHVV…KGRLIATAKG (67 aa)).

It belongs to the methylthiotransferase family. MiaB subfamily. Monomer. The cofactor is [4Fe-4S] cluster.

It localises to the cytoplasm. It carries out the reaction N(6)-dimethylallyladenosine(37) in tRNA + (sulfur carrier)-SH + AH2 + 2 S-adenosyl-L-methionine = 2-methylsulfanyl-N(6)-dimethylallyladenosine(37) in tRNA + (sulfur carrier)-H + 5'-deoxyadenosine + L-methionine + A + S-adenosyl-L-homocysteine + 2 H(+). Its function is as follows. Catalyzes the methylthiolation of N6-(dimethylallyl)adenosine (i(6)A), leading to the formation of 2-methylthio-N6-(dimethylallyl)adenosine (ms(2)i(6)A) at position 37 in tRNAs that read codons beginning with uridine. In Helicobacter pylori (strain Shi470), this protein is tRNA-2-methylthio-N(6)-dimethylallyladenosine synthase.